Here is a 413-residue protein sequence, read N- to C-terminus: Tyrosine--tRNA ligase (413 aa).

Residues 60-69 carry the 'HIGH' region motif; sequence PTAPDIHIGH. The 'KMSKS' region signature appears at 244–248; the sequence is KMSKS. K247 provides a ligand contact to ATP. One can recognise an S4 RNA-binding domain in the interval 352–412; the sequence is LGIAQLLKQA…GKRRFARVTL (61 aa).

Belongs to the class-I aminoacyl-tRNA synthetase family. TyrS type 2 subfamily. In terms of assembly, homodimer.

The protein localises to the cytoplasm. The catalysed reaction is tRNA(Tyr) + L-tyrosine + ATP = L-tyrosyl-tRNA(Tyr) + AMP + diphosphate + H(+). In terms of biological role, catalyzes the attachment of tyrosine to tRNA(Tyr) in a two-step reaction: tyrosine is first activated by ATP to form Tyr-AMP and then transferred to the acceptor end of tRNA(Tyr). This is Tyrosine--tRNA ligase from Cupriavidus pinatubonensis (strain JMP 134 / LMG 1197) (Cupriavidus necator (strain JMP 134)).